A 102-amino-acid polypeptide reads, in one-letter code: Keratinocyte differentiation-associated protein (102 aa).

The first 22 residues, 1 to 22 (MKIPILPVVALLSLLALHAVQG), serve as a signal peptide directing secretion.

As to expression, expression restricted to suprabasal keratinocytes of the epidermis.

The protein localises to the secreted. Functionally, may act as a soluble regulator of keratinocyte differentiation. May play an important role in embryonic skin morphogenesis. The sequence is that of Keratinocyte differentiation-associated protein from Mus musculus (Mouse).